The following is a 224-amino-acid chain: Response regulator protein GraR (224 aa).

One can recognise a Response regulatory domain in the interval 2–115 (DILLVEDDMT…VLIAKLQAIY (114 aa)). Position 51 is a 4-aspartylphosphate (D51). The ompR/PhoB-type DNA-binding region spans 126–224 (KRVLSWQDAI…KIGKGYMAHG (99 aa)).

Phosphorylated by GraS.

The protein resides in the cytoplasm. Its function is as follows. Member of the two-component regulatory system GraR/GraS involved in resistance against cationic antimicrobial peptides (CAMPs). The protein is Response regulator protein GraR (graR) of Staphylococcus saprophyticus subsp. saprophyticus (strain ATCC 15305 / DSM 20229 / NCIMB 8711 / NCTC 7292 / S-41).